The following is a 620-amino-acid chain: 1-deoxy-D-xylulose-5-phosphate synthase (620 aa).

Residues H80 and 121–123 (GHS) contribute to the thiamine diphosphate site. Residue D152 coordinates Mg(2+). Thiamine diphosphate contacts are provided by residues 153–154 (GA), N181, Y288, and E370. A Mg(2+)-binding site is contributed by N181.

This sequence belongs to the transketolase family. DXPS subfamily. As to quaternary structure, homodimer. Mg(2+) is required as a cofactor. Thiamine diphosphate serves as cofactor.

It catalyses the reaction D-glyceraldehyde 3-phosphate + pyruvate + H(+) = 1-deoxy-D-xylulose 5-phosphate + CO2. It functions in the pathway metabolic intermediate biosynthesis; 1-deoxy-D-xylulose 5-phosphate biosynthesis; 1-deoxy-D-xylulose 5-phosphate from D-glyceraldehyde 3-phosphate and pyruvate: step 1/1. Catalyzes the acyloin condensation reaction between C atoms 2 and 3 of pyruvate and glyceraldehyde 3-phosphate to yield 1-deoxy-D-xylulose-5-phosphate (DXP). In Salmonella choleraesuis (strain SC-B67), this protein is 1-deoxy-D-xylulose-5-phosphate synthase.